We begin with the raw amino-acid sequence, 238 residues long: Probable amino-acid ABC transporter permease protein y4tF (238 aa).

The ABC transmembrane type-1 domain maps to 29 to 223; sequence AWVTIQFTLY…GIALVLSFFM (195 aa). 5 consecutive transmembrane segments (helical) span residues 33 to 53, 77 to 97, 103 to 123, 152 to 172, and 203 to 223; these read IQFT…FGIG, LLVQ…MMGI, PVVA…AEIV, VALP…AIAA, and TVYT…SFFM.

Belongs to the binding-protein-dependent transport system permease family. HisMQ subfamily.

It localises to the cell inner membrane. Functionally, probably part of the binding-protein-dependent transport system y4tEFGH for an amino acid. Probably responsible for the translocation of the substrate across the membrane. This is Probable amino-acid ABC transporter permease protein y4tF from Sinorhizobium fredii (strain NBRC 101917 / NGR234).